Reading from the N-terminus, the 530-residue chain is Arginine-containing cyclodipeptide synthase pthA (530 aa).

The Conserved DDXXE motif motif lies at 419–423 (DDRAE).

This sequence belongs to the arginine-containing cyclodipeptide synthase family.

The catalysed reaction is L-aspartyl-tRNA(Asp) + L-arginyl-tRNA(Arg) = cyclo(L-arginyl-L-aspartyl) + tRNA(Asp) + tRNA(Arg) + 2 H(+). Its pathway is secondary metabolite biosynthesis. Its function is as follows. Arginine-containing cyclodipeptide synthase; part of the cluster that mediates the biosynthesis of a highly modified cyclo-arginine-aspartate dipeptide (cRD). Within the pathway, pthA acts as the scaffold-generating enzyme and is responsible for formation of the cyclo-Arg-Asp diketopiperazine (cRW) from L-arginyl-tRNA(Arg) + L-aspartyl-tRNA(Asp). Additional enzymes from the cluster then further modify the cyclo-Arg-Asp diketopiperazine (cRW) scaffold. This chain is Arginine-containing cyclodipeptide synthase pthA, found in Penicillium thymicola.